We begin with the raw amino-acid sequence, 326 residues long: WD repeat-containing protein slr1409 (326 aa).

WD repeat units lie at residues 47–77 (GSDVAINRIHFSPDGQFLLTAAADGVGTLWT), 88–118 (GQKPPMFNARLSPDRQILITTGYDGTIRLWN), 129–159 (PHRAAVADAIFSPDSQIIVTCSDDGQTKIFT), 169–199 (LKSGTARNLAYHPQGLLIASVSDSGSLHLIN), 210–240 (TGQGRINNVNFSPNGEQLLTSGINGSAKLWN), and 252–282 (VPTGWVNSAQFYPKGEWLATASDDGTIRFWQ).

This chain is WD repeat-containing protein slr1409, found in Synechocystis sp. (strain ATCC 27184 / PCC 6803 / Kazusa).